We begin with the raw amino-acid sequence, 349 residues long: GTPase Obg (349 aa).

Residues 1 to 159 enclose the Obg domain; it reads MKFLDQAKVY…LWIWLRLKLI (159 aa). In terms of domain architecture, OBG-type G spans 160 to 327; the sequence is ADAGLIGLPN…VLRALMRVVQ (168 aa). Residues 166-173, 191-195, 212-215, 279-282, and 308-310 each bind GTP; these read GLPNAGKS, FTTLH, DIPG, SQID, and SSA. 2 residues coordinate Mg(2+): S173 and T193.

It belongs to the TRAFAC class OBG-HflX-like GTPase superfamily. OBG GTPase family. Monomer. The cofactor is Mg(2+).

It localises to the cytoplasm. An essential GTPase which binds GTP, GDP and possibly (p)ppGpp with moderate affinity, with high nucleotide exchange rates and a fairly low GTP hydrolysis rate. Plays a role in control of the cell cycle, stress response, ribosome biogenesis and in those bacteria that undergo differentiation, in morphogenesis control. This Chelativorans sp. (strain BNC1) protein is GTPase Obg.